We begin with the raw amino-acid sequence, 781 residues long: MKPGATGESDLAEVLPQHKFDSKSLEAYLNQHLSGFGAEREATLTIAQYRAGKSNPTFYLQKGFQTYVLRKKPPGSLLPKAHQIDREFKVQKALFSIGFPVPKPILYCSDTSVIGTEFYIMEHVQGRIFRDLTIPGVSPAERSALYVAIVETLAQLHSLNIQSLQLEGYGIGAGYCKRQVSTWTKQYQAAAHQDIPAMQQLSEWLMKNLPDNDNEENLIHGDFRLDNIIFHPKECRVIAVLDWELSTIGHPLSDLAHFSLFYFWPRTVPMINQGSYSEENSGIPSMEELISIYCRCRGINSSLPNWNFFLALSYFKMAGIAQGVYSRYLLGNNSSEDSFLFANIVQPLAETGLQLSKRTFSTVLPQIDTAGQLFVQTRKGQEVLIKVKHFMKQHILPAEKEVTEFYVQNENSVDKWGKPLVIDKLKEMAKAEGLWNLFLPAVSGLSQVDYALIAEETGKCFFAPDVFNCQAPDTGNMEILHLYGSEEQKKQWLEPLLQGNITSCFCMTEPDVASSDATNIECSIQREEDSYVINGKKWWSSGAGNPKCKIAIVLGRTQNTSLSRHKQHSMILVPMNTPGVEIIRPLSVFGYTDNFHGGHFEIHFNQVRVPATNLILGEGRGFEISQGRLGPGRIHHCMRTVGLAERALQIMCERATQRIAFKKKLYAHEVVAHWIAESRIAIEKIRLLTLKAAHSMDTLGSAGAKKEIAMIKVAAPRAVSKIVDWAIQVCGGAGVSQDYPLANMYAITRVLRLADGPDEVHLSAIATMELRDQAKRLTAKI.

Lys-177 is modified (N6-acetyllysine). A Phosphotyrosine modification is found at Tyr-325. Lys-392 carries the post-translational modification N6-succinyllysine. FAD-binding positions include 505 to 515 (FCMTEPDVASS), 513 to 515 (ASS), 539 to 541 (WSS), and Ser-541. Residue Ser-515 participates in substrate binding. Residue 630 to 633 (GPGR) participates in substrate binding. FAD-binding positions include Arg-658, Gln-728, and 728–732 (QVCGG). Gly-756 provides a ligand contact to substrate. FAD is bound by residues 757 to 759 (PDE) and Glu-759.

It belongs to the acyl-CoA dehydrogenase family. As to quaternary structure, homodimer. The cofactor is FAD.

The protein localises to the peroxisome. It is found in the mitochondrion membrane. The enzyme catalyses a 2,3-saturated acyl-CoA + oxidized [electron-transfer flavoprotein] + H(+) = a (2E)-enoyl-CoA + reduced [electron-transfer flavoprotein]. It carries out the reaction docosanoyl-CoA + oxidized [electron-transfer flavoprotein] + H(+) = (2E)-docosenoyl-CoA + reduced [electron-transfer flavoprotein]. It catalyses the reaction tetracosanoyl-CoA + oxidized [electron-transfer flavoprotein] + H(+) = (2E)-tetracosenoyl-CoA + reduced [electron-transfer flavoprotein]. The catalysed reaction is eicosanoyl-CoA + oxidized [electron-transfer flavoprotein] + H(+) = (2E)-eicosenoyl-CoA + reduced [electron-transfer flavoprotein]. The enzyme catalyses hexacosanoyl-CoA + oxidized [electron-transfer flavoprotein] + H(+) = (2E)-hexacosenoyl-CoA + reduced [electron-transfer flavoprotein]. It carries out the reaction tricosanoyl-CoA + oxidized [electron-transfer flavoprotein] + H(+) = (2E)-tricosenoyl-CoA + reduced [electron-transfer flavoprotein]. It functions in the pathway lipid metabolism; fatty acid beta-oxidation. In terms of biological role, acyl-CoA dehydrogenase, that exhibits maximal activity towards saturated C22-CoA. Probably participates in beta-oxydation and energy production but could also play a role in the metabolism of specific fatty acids to control fatty acids composition of cellular lipids in brain. This chain is Acyl-CoA dehydrogenase family member 11 (ACAD11), found in Pongo abelii (Sumatran orangutan).